Here is a 75-residue protein sequence, read N- to C-terminus: Small ribosomal subunit protein bS18c (75 aa).

Belongs to the bacterial ribosomal protein bS18 family. As to quaternary structure, part of the 30S ribosomal subunit.

The protein resides in the plastid. The polypeptide is Small ribosomal subunit protein bS18c (Aneura mirabilis (Parasitic liverwort)).